The primary structure comprises 230 residues: MIKHQFKLSDPRLLSRIGYQFKQLELLQLALTHRSVSHKYNYERLEFLGDSLLGMIIANYLYHAYPNENEGRLTRMRATLVRQEALGKIATDLQLSRCLILSTGELKSGGHHRESILADTVEAIIGAIYLDSGDLNLLKDIVLKWYIPYLDHIEPTDQLKDPKSRLQEYLQARKKPLPVYEVVDIQGDAPHQHFKVECVVDGLPKIYGEGSSRRFAEQAAAAEILKLLEQ.

The RNase III domain maps to 10–133 (DPRLLSRIGY…IIGAIYLDSG (124 aa)). E46 lines the Mg(2+) pocket. D50 is a catalytic residue. D119 and E122 together coordinate Mg(2+). Residue E122 is part of the active site. Residues 161–230 (DPKSRLQEYL…AAEILKLLEQ (70 aa)) form the DRBM domain.

The protein belongs to the ribonuclease III family. In terms of assembly, homodimer. The cofactor is Mg(2+).

Its subcellular location is the cytoplasm. It catalyses the reaction Endonucleolytic cleavage to 5'-phosphomonoester.. In terms of biological role, digests double-stranded RNA. Involved in the processing of primary rRNA transcript to yield the immediate precursors to the large and small rRNAs (23S and 16S). Processes some mRNAs, and tRNAs when they are encoded in the rRNA operon. Processes pre-crRNA and tracrRNA of type II CRISPR loci if present in the organism. The sequence is that of Ribonuclease 3 (rnc) from Acinetobacter pittii (strain PHEA-2).